Consider the following 410-residue polypeptide: Multifunctional CCA protein (410 aa).

ATP-binding residues include glycine 8 and arginine 11. CTP contacts are provided by glycine 8 and arginine 11. Positions 21 and 23 each coordinate Mg(2+). 3 residues coordinate ATP: arginine 91, arginine 137, and arginine 140. The CTP site is built by arginine 91, arginine 137, and arginine 140. The HD domain maps to 228–329 (TGIHSLMTLR…VKLLEQVDAF (102 aa)).

Belongs to the tRNA nucleotidyltransferase/poly(A) polymerase family. Bacterial CCA-adding enzyme type 1 subfamily. As to quaternary structure, monomer. Can also form homodimers and oligomers. Mg(2+) serves as cofactor. Ni(2+) is required as a cofactor.

It catalyses the reaction a tRNA precursor + 2 CTP + ATP = a tRNA with a 3' CCA end + 3 diphosphate. The enzyme catalyses a tRNA with a 3' CCA end + 2 CTP + ATP = a tRNA with a 3' CCACCA end + 3 diphosphate. Catalyzes the addition and repair of the essential 3'-terminal CCA sequence in tRNAs without using a nucleic acid template. Adds these three nucleotides in the order of C, C, and A to the tRNA nucleotide-73, using CTP and ATP as substrates and producing inorganic pyrophosphate. tRNA 3'-terminal CCA addition is required both for tRNA processing and repair. Also involved in tRNA surveillance by mediating tandem CCA addition to generate a CCACCA at the 3' terminus of unstable tRNAs. While stable tRNAs receive only 3'-terminal CCA, unstable tRNAs are marked with CCACCA and rapidly degraded. The chain is Multifunctional CCA protein from Legionella pneumophila subsp. pneumophila (strain Philadelphia 1 / ATCC 33152 / DSM 7513).